We begin with the raw amino-acid sequence, 298 residues long: Spermidine synthase (298 aa).

In terms of domain architecture, PABS spans 13–248; the sequence is DGWFREINNM…GSIGFVVASK (236 aa). Gln44 is an S-adenosyl 3-(methylsulfanyl)propylamine binding site. Tyr74 provides a ligand contact to putrescine. S-adenosyl 3-(methylsulfanyl)propylamine contacts are provided by residues Gln75, Asp99, Asp119, 150-151, and Asp168; that span reads DG. Asp168 (proton acceptor) is an active-site residue. Putrescine contacts are provided by residues 168-171 and Tyr236; that span reads DSSD.

This sequence belongs to the spermidine/spermine synthase family.

The enzyme catalyses S-adenosyl 3-(methylsulfanyl)propylamine + putrescine = S-methyl-5'-thioadenosine + spermidine + H(+). It participates in amine and polyamine biosynthesis; spermidine biosynthesis; spermidine from putrescine: step 1/1. The sequence is that of Spermidine synthase from Schizosaccharomyces pombe (strain 972 / ATCC 24843) (Fission yeast).